The sequence spans 252 residues: Beta-carotene isomerase D27, chloroplastic (252 aa).

The transit peptide at 1–43 (MDSKMIAHNMSLTPTLAQWKKLRLKPKHTFVVGVLARPTDDIS) directs the protein to the chloroplast.

Fe cation is required as a cofactor. As to expression, highly expressed in roots. Expressed at low levels in leaves and stems.

Its subcellular location is the plastid. The protein localises to the chloroplast. The catalysed reaction is all-trans-beta-carotene = 9-cis-beta-carotene. In terms of biological role, involved in strigolactones biosynthesis by catalyzing the isomerization of the C9-C10 double bond in all-trans-beta-carotene leading to 9-cis-beta-carotene and providing the substrate for CCD7. Strigolactones are hormones that inhibit tillering and shoot branching through the MAX-dependent pathway, contribute to the regulation of shoot architectural response to phosphate-limiting conditions and function as rhizosphere signals that stimulate hyphal branching of arbuscular mycorrhizal fungi and trigger seed germination of root parasitic weeds. This chain is Beta-carotene isomerase D27, chloroplastic, found in Medicago truncatula (Barrel medic).